We begin with the raw amino-acid sequence, 229 residues long: Ferric nitrobindin-like protein (229 aa).

The tract at residues Met1–Asp54 is disordered. Over residues Asp18–Ala33 the composition is skewed to low complexity. Positions Gly82–Gly88 match the GXWXGXG motif.

It belongs to the nitrobindin family.

In Corynebacterium glutamicum (strain R), this protein is Ferric nitrobindin-like protein.